The chain runs to 174 residues: Transcription antitermination protein NusB (174 aa).

It belongs to the NusB family.

Involved in transcription antitermination. Required for transcription of ribosomal RNA (rRNA) genes. Binds specifically to the boxA antiterminator sequence of the ribosomal RNA (rrn) operons. The polypeptide is Transcription antitermination protein NusB (Rhodopseudomonas palustris (strain ATCC BAA-98 / CGA009)).